The following is a 320-amino-acid chain: Zinc transporter ZitB (320 aa).

Transmembrane regions (helical) follow at residues L16–L36, L43–V63, A85–I105, V117–L137, L153–L173, and I180–L200.

This sequence belongs to the cation diffusion facilitator (CDF) transporter (TC 2.A.4) family. SLC30A subfamily.

It localises to the cell inner membrane. Involved in zinc efflux across the cytoplasmic membrane, thus reducing zinc accumulation in the cytoplasm and rendering bacteria more resistant to zinc. It may contribute to zinc homeostasis at low concentrations of zinc. The sequence is that of Zinc transporter ZitB from Pectobacterium atrosepticum (strain SCRI 1043 / ATCC BAA-672) (Erwinia carotovora subsp. atroseptica).